We begin with the raw amino-acid sequence, 399 residues long: Elongation factor Tu (399 aa).

Residues 10 to 209 (KPHVNIGTIG…KVDEYIPTPV (200 aa)) enclose the tr-type G domain. Residues 19–26 (GHVDHGKT) form a G1 region. 19–26 (GHVDHGKT) lines the GTP pocket. Residue Thr-26 participates in Mg(2+) binding. The tract at residues 60–64 (GITIA) is G2. Residues 81 to 84 (DCPG) form a G3 region. GTP is bound by residues 81-85 (DCPGH) and 136-139 (NKAD). A G4 region spans residues 136 to 139 (NKAD). A G5 region spans residues 174–176 (SAL).

Belongs to the TRAFAC class translation factor GTPase superfamily. Classic translation factor GTPase family. EF-Tu/EF-1A subfamily. Monomer.

The protein localises to the cytoplasm. The catalysed reaction is GTP + H2O = GDP + phosphate + H(+). Functionally, GTP hydrolase that promotes the GTP-dependent binding of aminoacyl-tRNA to the A-site of ribosomes during protein biosynthesis. This is Elongation factor Tu from Campylobacter curvus (strain 525.92).